The following is a 301-amino-acid chain: tRNA dimethylallyltransferase (301 aa).

10–17 contributes to the ATP binding site; sequence GATATGKT. 12-17 is a binding site for substrate; that stretch reads TATGKT. An interaction with substrate tRNA region spans residues 35-38; it reads DSRQ.

It belongs to the IPP transferase family. In terms of assembly, monomer. The cofactor is Mg(2+).

The catalysed reaction is adenosine(37) in tRNA + dimethylallyl diphosphate = N(6)-dimethylallyladenosine(37) in tRNA + diphosphate. In terms of biological role, catalyzes the transfer of a dimethylallyl group onto the adenine at position 37 in tRNAs that read codons beginning with uridine, leading to the formation of N6-(dimethylallyl)adenosine (i(6)A). This chain is tRNA dimethylallyltransferase, found in Crocosphaera subtropica (strain ATCC 51142 / BH68) (Cyanothece sp. (strain ATCC 51142)).